Reading from the N-terminus, the 357-residue chain is Trans-resveratrol di-O-methyltransferase (357 aa).

Residues G200, D223, D243, M244, and K257 each coordinate S-adenosyl-L-methionine. Residue H261 is the Proton acceptor of the active site.

Belongs to the class I-like SAM-binding methyltransferase superfamily. Cation-independent O-methyltransferase family. COMT subfamily.

It carries out the reaction trans-resveratrol + 2 S-adenosyl-L-methionine = pterostilbene + 2 S-adenosyl-L-homocysteine + 2 H(+). Catalyzes the biosynthesis of pterostilbene from resveratrol. Pterostilbene has both antifungal and pharmacological properties. Also has activity toward resveratrol monomethyl ether (RME). In Vitis vinifera (Grape), this protein is Trans-resveratrol di-O-methyltransferase (ROMT).